Consider the following 300-residue polypeptide: tRNA dimethylallyltransferase (300 aa).

8–15 (GASASGKS) is a binding site for ATP. 10 to 15 (SASGKS) lines the substrate pocket. The tract at residues 33–36 (DSLS) is interaction with substrate tRNA.

It belongs to the IPP transferase family. As to quaternary structure, monomer. Mg(2+) is required as a cofactor.

The enzyme catalyses adenosine(37) in tRNA + dimethylallyl diphosphate = N(6)-dimethylallyladenosine(37) in tRNA + diphosphate. Its function is as follows. Catalyzes the transfer of a dimethylallyl group onto the adenine at position 37 in tRNAs that read codons beginning with uridine, leading to the formation of N6-(dimethylallyl)adenosine (i(6)A). This is tRNA dimethylallyltransferase from Wolinella succinogenes (strain ATCC 29543 / DSM 1740 / CCUG 13145 / JCM 31913 / LMG 7466 / NCTC 11488 / FDC 602W) (Vibrio succinogenes).